The chain runs to 188 residues: Adenine phosphoribosyltransferase (188 aa).

Belongs to the purine/pyrimidine phosphoribosyltransferase family. Homodimer.

The protein localises to the cytoplasm. The enzyme catalyses AMP + diphosphate = 5-phospho-alpha-D-ribose 1-diphosphate + adenine. The protein operates within purine metabolism; AMP biosynthesis via salvage pathway; AMP from adenine: step 1/1. Catalyzes a salvage reaction resulting in the formation of AMP, that is energically less costly than de novo synthesis. The protein is Adenine phosphoribosyltransferase of Salinispora tropica (strain ATCC BAA-916 / DSM 44818 / JCM 13857 / NBRC 105044 / CNB-440).